Consider the following 148-residue polypeptide: Multiprotein-bridging factor 1c (148 aa).

An HTH cro/C1-type domain is found at 91–145 (IQKARLEKKMSQADLAKQINERTQVVQEYENGKAVPNQAVLAKMEKVLGVKLRGK). The H-T-H motif DNA-binding region spans 102–121 (QADLAKQINERTQVVQEYEN).

It belongs to the MBF1 family. In terms of assembly, binds to TPS5. In terms of tissue distribution, expressed in leaves, roots, stems, flowers, siliques and shoots. Not detected in seeds.

It localises to the nucleus. It is found in the nucleolus. The protein resides in the cytoplasm. Transcriptional coactivator that stimulates transcriptional activity by bridging regulatory proteins and TBP, thereby recruiting TBP to promoters occupied by DNA-binding regulators. Involved in the tolerance to heat and osmotic stress by partially activating the ethylene-response signal transduction pathway. The chain is Multiprotein-bridging factor 1c (MBF1C) from Arabidopsis thaliana (Mouse-ear cress).